The chain runs to 262 residues: Hemin import ATP-binding protein HmuV (262 aa).

An ABC transporter domain is found at 5–242 (LEARKAGFAT…ELIGAVFDVE (238 aa)). 37–44 (GPNGAGKS) contributes to the ATP binding site.

This sequence belongs to the ABC transporter superfamily. Heme (hemin) importer (TC 3.A.1.14.5) family. In terms of assembly, the complex is composed of two ATP-binding proteins (HmuV), two transmembrane proteins (HmuU) and a solute-binding protein (HmuT).

The protein resides in the cell inner membrane. Its function is as follows. Part of the ABC transporter complex HmuTUV involved in hemin import. Responsible for energy coupling to the transport system. The protein is Hemin import ATP-binding protein HmuV of Rhodopseudomonas palustris (strain HaA2).